The following is a 504-amino-acid chain: MQQSTPYLSFRGIGKTFPGVKALTDISFDCYAGQVHALMGENGAGKSTLLKILSGNYAPTTGSVVINGQEMSFSDTTAALNAGVAIIYQELHLVPEMTVAENIYLGQLPHKGGIVNRSLLNYEAGLQIKHLGMDIDPDTPLKYLSIGQWQMVEIAKALARNAKIIAFDEPTSSLSAREIDNLFRVIRELRKEGRVILYVSHRMEEIFALSDAITVFKDGRYVKTFTDMQQVDHDALVQAMVGRDIGDIYGWQPRSYGEERLRLDAVKAPGVRTPISLAVRSGEIVGLFGLVGAGRSELMKGMFGGTQITAGQVYIDQQPIDIRKPSHAIAAGMMLCPEDRKAEGIIPVHSVRDNINISARRKHVLGGCVINNGWEENNADHHIRSLNIKTPGAEQLIMNLSGGNQQKAILGRWLSEEMKVILLDEPTRGIDVGAKHEIYNVIYALAAQGVAVLFASSDLPEVLGVADRIVVMREGEIAGELLHEQADERQALSLAMPKVSQAVA.

ABC transporter domains are found at residues 8–243 and 256–499; these read LSFR…MVGR and YGEE…MPKV. Position 40 to 47 (40 to 47) interacts with ATP; that stretch reads GENGAGKS.

Belongs to the ABC transporter superfamily. Arabinose importer (TC 3.A.1.2.2) family. As to quaternary structure, the complex is composed of two ATP-binding proteins (AraG), two transmembrane proteins (AraH) and a solute-binding protein (AraF).

Its subcellular location is the cell inner membrane. The catalysed reaction is L-arabinose(out) + ATP + H2O = L-arabinose(in) + ADP + phosphate + H(+). Functionally, part of the ABC transporter complex AraFGH involved in arabinose import. Responsible for energy coupling to the transport system. The polypeptide is Arabinose import ATP-binding protein AraG (Escherichia coli (strain UTI89 / UPEC)).